Here is a 596-residue protein sequence, read N- to C-terminus: Putative terpene synthase 2, chloroplastic (596 aa).

A chloroplast-targeting transit peptide spans 1–46 (MATLSMQVSTLSKQVKNLNTFGMGSASKLPMVARRVSTTRLRPICS). Mn(2+) is bound by residues D349 and D353. The DDXXD motif motif lies at 349–353 (DDVYD). Homodimerization stretches follow at residues 355-361 (YGTLDEL) and 427-464 (EAKWYYAGYTPTLAEYLENAKVSISSPTIISQVYFTLP). Residues D493 and E501 each coordinate Mn(2+).

It belongs to the terpene synthase family. Homodimer. Mn(2+) serves as cofactor. It depends on Mg(2+) as a cofactor.

It localises to the plastid. The protein resides in the chloroplast. It functions in the pathway secondary metabolite biosynthesis; terpenoid biosynthesis. Putative monoterpene synthase inactive on geranyl diphosphate (GPP). The protein is Putative terpene synthase 2, chloroplastic of Thymus vulgaris (Thyme).